The sequence spans 245 residues: tRNA pseudouridine synthase A (245 aa).

Aspartate 52 (nucleophile) is an active-site residue. Tyrosine 111 contacts substrate.

The protein belongs to the tRNA pseudouridine synthase TruA family. In terms of assembly, homodimer.

The catalysed reaction is uridine(38/39/40) in tRNA = pseudouridine(38/39/40) in tRNA. In terms of biological role, formation of pseudouridine at positions 38, 39 and 40 in the anticodon stem and loop of transfer RNAs. The sequence is that of tRNA pseudouridine synthase A from Thermotoga sp. (strain RQ2).